The primary structure comprises 249 residues: uncharacterized protein (249 aa).

Belongs to the HAD-like hydrolase superfamily. CbbY/CbbZ/Gph/YieH family.

This is an uncharacterized protein from Schizosaccharomyces pombe (strain 972 / ATCC 24843) (Fission yeast).